Here is a 1016-residue protein sequence, read N- to C-terminus: MDLSTKKVISAGLVFIYALSLAMLVPMFLASNQGVISAVINPATGGNCLPGRYSGIVQASGVTLPAVNLSYVAPFTSALPLLVYSQSIFNGTLYYYNSTGSYELMKKYGISITPVHQIVNVTSRFFARTTEGVIPNTLPPYTSGNCYLFNTTPPTPFYYSYRTLAMVNSYFPNTQYINTSSEISDLYFNVSYLPYNTTLTLSIYATPALQGIEGIIRFNFSVKLCANSTIYPYAEYTLHAYFYFNNSFICELENIKTSIPGVASATSPTTIHFTSTAVNYILLVDLGLWSNVSTVYVTGVEGATYPSDTVATTINNGSFHPVIIPPAICIQYKTFYSNQINPELPNTSGPDSIPYMIANVTIYSPDDMLNWTYAQKYVGCIAAEYANPKWNPYCKINEAWYNNYGHGGNGLTVTLMVGNNKVLSINYPYLALCHVSYTDGFHNFVYKFSIEFLLSSVDNITYMLTTVAPNSTGLGGDMLYVLIKPCQLKDATILLTYNDSDYAVQHYFGPVDREIAVVCNNIKVYTPLLYMPKCVPISTPFFYGQVIDYDYGYNYALVGYVNTYYFNATSHQYYKVGQYVDVQHVSGDSELVLGVCPGYKCASLSIYYPNTPPYYPASHEAKVGKIMGICIEFANGTMERIYLSPSNITALLTTNVMKQMAPMPPFWNYSFEISITGLESILHITPNQALTVLNNSYIIVCYYDIASNSTVHNMTKLVSTPVTVAISPPSQAFYYAPATPFDDIVHPGCQIFYFVNVNATYPITVTLTDKSLGELSPTTIVTTTVTCIYVILYNGTMLHYNSAVFPITLTETAPSSGVFTATLYVEVTNSKGTPVTAYPLNYSYIAIYNPATKMQIIVGKLSNIMPLVPSKYFKVGVVVDGLSANSTFTLTEIPNVIYNVSPIIYNYIDGELSVTVAANIPGYYYSGYLVLTIYNCTAKPCHPIYTYEIYFNFSATSPHFVAAYDLLFLEPILNGHTYYITITAIVVPLTYEPFTTIGFEGKVFSGAYFFSAPAGS.

The first 30 residues, 1-30 (MDLSTKKVISAGLVFIYALSLAMLVPMFLA), serve as a signal peptide directing secretion.

Belongs to the Sulfolobales SlaA family. The mushroom-shaped unit cells of the Sulfolobales' S-layers may consist of three SlaB subunits and six SlaA subunits.

It localises to the secreted. The protein localises to the cell wall. The protein resides in the S-layer. In terms of biological role, S-layer large protein. May form the highly ordered outer sheath. The chain is S-layer protein A from Acidianus ambivalens (Desulfurolobus ambivalens).